Here is a 661-residue protein sequence, read N- to C-terminus: MSLNLAALAQAANEARGLGMDAVEKAASGHLGLPLGCAELGATLFGHAFRYNPDKPEWLNRDIFVLSAGHGSMFLYAWLHLSGYKVSLDDIKQFRQLSSTTPGHPEFRDTPGVEATTGPLGQGVGNGLGYAVACKMAQAHFNTKDHKIFDQKVVVLAGDGCLQEGVAQEASALAGHLHLDNLIIFYDSNDVTLDAMAIESQSEDTAKRYEAYGFEVVTVKEGHNIERILEAYEHAKNSTSGKPQLIILKTTIAKGITEVAGTNKGHGEAGVKFVAAARKGLGLPEEKFFVSKGTRDYFQAHKEKLQKEYASWEKLYSEWRSANPELAALLDSAKVTPDASKLFSVIPKFADAPIATRKAGSDVLQPLAKALPLFISGSADLHGSTLNYIAGAGDYTPKNTGGRNIKFGIREHAMGAMLNGFAYHGIFRPSGATFLVFSDYLRPSIRLAALSHLPVIYIFTHDSVAVGEDGPTHQPVETVSSLRLIPNLDVIRPGDHEETAGAFVAALSRTTGPTLLALCRQNLPNLSQFDVNARREGVLKGGYILQKETGALKVIVISTGSELNVAVEAAKRLGDGVRVVSMPSTYRFDQQPAEYKEEVLPSSCKKRVVIEAGVTPLWHKYVGLEGKIIGIDRFGTSAPGATVLKTLGITADAVVAAANSF.

Residue His-30 coordinates substrate. Residues His-70 and Gly-118–Leu-120 each bind thiamine diphosphate. The interval Ser-99–Gly-118 is disordered. Residue Asp-159 coordinates Mg(2+). The thiamine diphosphate site is built by Gly-160 and Asn-189. Mg(2+)-binding residues include Asn-189 and Val-191. His-266, Arg-357, and Ser-384 together coordinate substrate. Thiamine diphosphate is bound at residue His-266. Glu-411 serves as the catalytic Proton donor. Phe-437 provides a ligand contact to thiamine diphosphate. 3 residues coordinate substrate: His-461, Asp-469, and Arg-520.

The protein belongs to the transketolase family. In terms of assembly, homodimer. Mg(2+) is required as a cofactor. Requires Ca(2+) as cofactor. Mn(2+) serves as cofactor. It depends on Co(2+) as a cofactor. The cofactor is thiamine diphosphate.

It catalyses the reaction D-sedoheptulose 7-phosphate + D-glyceraldehyde 3-phosphate = aldehydo-D-ribose 5-phosphate + D-xylulose 5-phosphate. Catalyzes the transfer of a two-carbon ketol group from a ketose donor to an aldose acceptor, via a covalent intermediate with the cofactor thiamine pyrophosphate. The chain is Transketolase (tkt) from Physarum polycephalum (Slime mold).